The sequence spans 497 residues: Probable cytosol aminopeptidase (497 aa).

Mn(2+) contacts are provided by Lys-267 and Asp-272. Lys-279 is an active-site residue. Positions 290, 349, and 351 each coordinate Mn(2+). The active site involves Arg-353.

Belongs to the peptidase M17 family. It depends on Mn(2+) as a cofactor.

It is found in the cytoplasm. The enzyme catalyses Release of an N-terminal amino acid, Xaa-|-Yaa-, in which Xaa is preferably Leu, but may be other amino acids including Pro although not Arg or Lys, and Yaa may be Pro. Amino acid amides and methyl esters are also readily hydrolyzed, but rates on arylamides are exceedingly low.. It carries out the reaction Release of an N-terminal amino acid, preferentially leucine, but not glutamic or aspartic acids.. In terms of biological role, presumably involved in the processing and regular turnover of intracellular proteins. Catalyzes the removal of unsubstituted N-terminal amino acids from various peptides. This Nitrosomonas europaea (strain ATCC 19718 / CIP 103999 / KCTC 2705 / NBRC 14298) protein is Probable cytosol aminopeptidase.